A 153-amino-acid polypeptide reads, in one-letter code: MEQSELMVRRIKEGTVIDHIDEGKGIQVLNALRIDGSDGSLITIALNVPSGKFKKKDIIKVENKFLKDDDTNKLAVIAPKATINMIKDYKLVEKRRVSLPNEIDRIFRCSNPDCVTNSTEHIESIMDVIDKEGRVLKCRYCSRVLDVNQLKYN.

C109, C114, C138, and C141 together coordinate Zn(2+).

Belongs to the PyrI family. As to quaternary structure, contains catalytic and regulatory chains. The cofactor is Zn(2+).

Involved in allosteric regulation of aspartate carbamoyltransferase. The polypeptide is Aspartate carbamoyltransferase regulatory chain (Nitrosopumilus maritimus (strain SCM1)).